Here is a 171-residue protein sequence, read N- to C-terminus: Mitochondrial import inner membrane translocase subunit Tim17-A (171 aa).

Cys9 and Cys78 are oxidised to a cystine. Helical transmembrane passes span 17–37 (CGGA…FKGF), 63–77 (GGSF…STID), and 113–133 (VGSA…GILL). The disordered stretch occupies residues 144 to 171 (GPQFTEDHSQLPSSQLPSSPFGDYRQYQ). The segment covering 153–163 (QLPSSQLPSSP) has biased composition (low complexity).

The protein belongs to the Tim17/Tim22/Tim23 family. In terms of assembly, component of the TIM23 complex at least composed of TIMM23, TIMM17 (TIMM17A or TIMM17B) and TIMM50. The complex interacts with the TIMM44 component of the PAM complex and with DNAJC15. Degraded by YMEL1 downstream of the integrated stress response (ISR).

The protein localises to the mitochondrion inner membrane. Essential component of the TIM23 complex, a complex that mediates the translocation of transit peptide-containing proteins across the mitochondrial inner membrane. This Mus musculus (Mouse) protein is Mitochondrial import inner membrane translocase subunit Tim17-A (Timm17a).